The following is a 187-amino-acid chain: Plasmodium-specific hydrophobic abundant protein (187 aa).

The N-terminal stretch at 1–18 is a signal peptide; that stretch reads MMKYVFVALCLFAVVALA.

The protein to HAP-S protein.

Its subcellular location is the membrane. The protein is Plasmodium-specific hydrophobic abundant protein of Physarum polycephalum (Slime mold).